We begin with the raw amino-acid sequence, 233 residues long: MKLLLLLALLLGAVSTRHLKVDTSSLQSLRGEESLAQDGETAEGATREATAGALMPLPEEEEMEGASGSEDDPEEEEEEEEEVEFSSELDVSPEDIQCPKEEDTVKFFSRPGYKTRGYVMVGSARTFNEAQWVCQRCYRGNLASIHSFAFNYQVQCTSAGLNVAQVWIGGQLRGKGRCRRFVWVDRTVWNFAYWARGQPWGGRQRGRCVTLCARGGHWRRSHCGKRRPFVCTY.

A signal peptide spans M1–S15. Residues T16–K114 constitute a propeptide, acidic. Residues S24–I96 are disordered. Residues A42 to L57 are compositionally biased toward low complexity. A compositionally biased stretch (acidic residues) spans P58–P93. The C-type lectin domain maps to W132–Y233. Intrachain disulfides connect C134–C231 and C208–C223.

In terms of processing, nitrated.

The protein localises to the cytoplasmic granule. Its function is as follows. MBP may play some important roles in the allergic reactions and inflammations, since MBP is capable of releasing histamine from mast cells and damaging the epithelial cells of bronchial tubes. Antiparasitic and antibiotic. The chain is Eosinophil granule major basic protein 1 (MBP1) from Cavia porcellus (Guinea pig).